The primary structure comprises 510 residues: ATP synthase subunit alpha (510 aa).

169–176 contributes to the ATP binding site; the sequence is GDRQTGKT.

It belongs to the ATPase alpha/beta chains family. In terms of assembly, F-type ATPases have 2 components, CF(1) - the catalytic core - and CF(0) - the membrane proton channel. CF(1) has five subunits: alpha(3), beta(3), gamma(1), delta(1), epsilon(1). CF(0) has three main subunits: a(1), b(2) and c(9-12). The alpha and beta chains form an alternating ring which encloses part of the gamma chain. CF(1) is attached to CF(0) by a central stalk formed by the gamma and epsilon chains, while a peripheral stalk is formed by the delta and b chains.

It localises to the cell membrane. It catalyses the reaction ATP + H2O + 4 H(+)(in) = ADP + phosphate + 5 H(+)(out). Functionally, produces ATP from ADP in the presence of a proton gradient across the membrane. The alpha chain is a regulatory subunit. The sequence is that of ATP synthase subunit alpha from Buchnera aphidicola subsp. Schizaphis graminum (strain Sg).